The primary structure comprises 386 residues: 2-isopropylmalate synthase (386 aa).

One can recognise a Pyruvate carboxyltransferase domain in the interval 12–265 (VRIFDTTLRD…DVGVRTYLLY (254 aa)). Positions 21, 203, 205, and 239 each coordinate a divalent metal cation.

It belongs to the alpha-IPM synthase/homocitrate synthase family. In terms of assembly, homodimer. A divalent metal cation is required as a cofactor.

The enzyme catalyses 3-methyl-2-oxobutanoate + acetyl-CoA + H2O = (2S)-2-isopropylmalate + CoA + H(+). Its pathway is amino-acid biosynthesis; L-leucine biosynthesis; L-leucine from 3-methyl-2-oxobutanoate: step 1/4. Its activity is regulated as follows. Is not inhibited by leucine. Catalyzes the condensation of the acetyl group of acetyl-CoA with 3-methyl-2-oxobutanoate (2-oxoisovalerate) to form 3-carboxy-3-hydroxy-4-methylpentanoate (2-isopropylmalate). Carries out the first step of the leucine biosynthesis pathway. Also displays a low citramalate synthase activity, using pyruvate as substrate, but is unable to use 2-oxoglutarate. This chain is 2-isopropylmalate synthase, found in Sulfolobus acidocaldarius (strain ATCC 33909 / DSM 639 / JCM 8929 / NBRC 15157 / NCIMB 11770).